The following is an 89-amino-acid chain: Elongation factor 1-beta (89 aa).

The protein belongs to the EF-1-beta/EF-1-delta family.

In terms of biological role, promotes the exchange of GDP for GTP in EF-1-alpha/GDP, thus allowing the regeneration of EF-1-alpha/GTP that could then be used to form the ternary complex EF-1-alpha/GTP/AAtRNA. This is Elongation factor 1-beta from Methanococcus maripaludis (strain C5 / ATCC BAA-1333).